The following is a 274-amino-acid chain: Basic leucine zipper transcriptional factor ATF-like 2 (274 aa).

Disordered stretches follow at residues 1–47 (MHLC…ALHQ), 128–151 (GSCY…LLQC), and 187–229 (GSSS…PSSA). Residues 17–80 (EQQRQLKKQK…AWWSRTLHVH (64 aa)) form the bZIP domain. Residues 20-41 (RQLKKQKNRAAAQRSRQKHTDK) are basic motif. The span at 37 to 47 (KHTDKADALHQ) shows a compositional bias: basic and acidic residues. The leucine-zipper stretch occupies residues 45–66 (LHQQHESLEKDNLALRKEIQSL). Positions 187–196 (GSSSKLSALQ) are enriched in low complexity.

The protein belongs to the bZIP family. As to quaternary structure, heterodimer; heterodimerizes with JUN family proteins.

The protein localises to the nucleus. AP-1 family transcription factor that controls the differentiation of lineage-specific cells in the immune system. Following infection, participates in the differentiation of CD8(+) thymic conventional dendritic cells in the immune system. Acts via the formation of a heterodimer with JUN family proteins that recognizes and binds DNA sequence 5'-TGA[CG]TCA-3' and regulates expression of target genes. Selectively suppresses CCN1 transcription and hence blocks the downstream cell proliferation signals produced by CCN1 and inhibits CCN1-induced anchorage-independent growth and invasion in several cancer types, such as breast cancer, malignant glioma and metastatic melanoma. Possibly acts by interfering with AP-1 binding to CCN1 promoter. The polypeptide is Basic leucine zipper transcriptional factor ATF-like 2 (BATF2) (Homo sapiens (Human)).